We begin with the raw amino-acid sequence, 130 residues long: uncharacterized protein (130 aa).

It belongs to the thioester dehydratase family. FabZ subfamily.

This is an uncharacterized protein from Bacillus subtilis (strain 168).